Consider the following 266-residue polypeptide: uncharacterized protein (266 aa).

The next 7 helical transmembrane spans lie at 25–45 (LPSL…GYLL), 64–84 (IGAA…AELI), 111–131 (IVTI…GHLV), 158–178 (VLIS…LSFG), 186–206 (ILGI…HVVA), 209–229 (FVIP…IGNI), and 230–250 (IPAF…IYFI).

It belongs to the FNT transporter (TC 1.A.16) family.

It localises to the cell membrane. This is an uncharacterized protein from Bacillus subtilis (strain 168).